The primary structure comprises 371 residues: N-methyl-L-tryptophan oxidase (371 aa).

4–34 (DLIVIGSGSVGSAAGYYASQAGLNVLMIDSA) provides a ligand contact to FAD. An S-8alpha-FAD cysteine modification is found at Cys307.

Belongs to the MSOX/MTOX family. MTOX subfamily. Monomer. The cofactor is FAD.

It carries out the reaction N(alpha)-methyl-L-tryptophan + O2 + H2O = L-tryptophan + formaldehyde + H2O2. In terms of biological role, catalyzes the oxidative demethylation of N-methyl-L-tryptophan. This Yersinia pseudotuberculosis serotype O:1b (strain IP 31758) protein is N-methyl-L-tryptophan oxidase.